The primary structure comprises 240 residues: Small ribosomal subunit protein uS3 (240 aa).

In terms of domain architecture, KH type-2 spans 39–109 (IRQYIEKTLN…QIRVNVIEVP (71 aa)). The interval 219-240 (APPSQPRRKSRRQQFDDRSQDG) is disordered. Residues 231 to 240 (QQFDDRSQDG) show a composition bias toward basic and acidic residues.

The protein belongs to the universal ribosomal protein uS3 family. In terms of assembly, part of the 30S ribosomal subunit. Forms a tight complex with proteins S10 and S14.

Binds the lower part of the 30S subunit head. Binds mRNA in the 70S ribosome, positioning it for translation. This chain is Small ribosomal subunit protein uS3, found in Synechocystis sp. (strain ATCC 27184 / PCC 6803 / Kazusa).